We begin with the raw amino-acid sequence, 322 residues long: Cytochrome c biogenesis protein CcsA (322 aa).

A run of 8 helical transmembrane segments spans residues 6–26 (LQLI…FLFF), 45–65 (LIAN…AGYF), 69–89 (NLYE…LFLY), 97–117 (LLDN…HFIL), 144–164 (MISY…LYFL), 230–250 (LITF…VWAN), 265–285 (WALI…IKGW), and 291–311 (AMVA…VNLL).

Belongs to the CcmF/CycK/Ccl1/NrfE/CcsA family. May interact with Ccs1.

Its subcellular location is the plastid. It is found in the cyanelle thylakoid membrane. Its function is as follows. Required during biogenesis of c-type cytochromes (cytochrome c6 and cytochrome f) at the step of heme attachment. In Cyanophora paradoxa, this protein is Cytochrome c biogenesis protein CcsA.